A 142-amino-acid chain; its full sequence is Large ribosomal subunit protein uL13 (142 aa).

The protein belongs to the universal ribosomal protein uL13 family. In terms of assembly, part of the 50S ribosomal subunit.

In terms of biological role, this protein is one of the early assembly proteins of the 50S ribosomal subunit, although it is not seen to bind rRNA by itself. It is important during the early stages of 50S assembly. In Laribacter hongkongensis (strain HLHK9), this protein is Large ribosomal subunit protein uL13.